Here is a 346-residue protein sequence, read N- to C-terminus: Glycerol-3-phosphate dehydrogenase [NAD(P)+] (346 aa).

Ser11, Trp12, His32, Arg33, and Lys106 together coordinate NADPH. Residues Lys106, Gly137, and Ser139 each coordinate sn-glycerol 3-phosphate. Ala141 contacts NADPH. 5 residues coordinate sn-glycerol 3-phosphate: Lys193, Asp246, Ser256, Arg257, and Asn258. Catalysis depends on Lys193, which acts as the Proton acceptor. Arg257 is an NADPH binding site. 2 residues coordinate NADPH: Val281 and Glu283.

The protein belongs to the NAD-dependent glycerol-3-phosphate dehydrogenase family.

Its subcellular location is the cytoplasm. The enzyme catalyses sn-glycerol 3-phosphate + NAD(+) = dihydroxyacetone phosphate + NADH + H(+). The catalysed reaction is sn-glycerol 3-phosphate + NADP(+) = dihydroxyacetone phosphate + NADPH + H(+). It participates in membrane lipid metabolism; glycerophospholipid metabolism. Functionally, catalyzes the reduction of the glycolytic intermediate dihydroxyacetone phosphate (DHAP) to sn-glycerol 3-phosphate (G3P), the key precursor for phospholipid synthesis. This Bacillus licheniformis (strain ATCC 14580 / DSM 13 / JCM 2505 / CCUG 7422 / NBRC 12200 / NCIMB 9375 / NCTC 10341 / NRRL NRS-1264 / Gibson 46) protein is Glycerol-3-phosphate dehydrogenase [NAD(P)+].